The sequence spans 94 residues: Large ribosomal subunit protein bL25 (94 aa).

It belongs to the bacterial ribosomal protein bL25 family. As to quaternary structure, part of the 50S ribosomal subunit; part of the 5S rRNA/L5/L18/L25 subcomplex. Contacts the 5S rRNA. Binds to the 5S rRNA independently of L5 and L18.

Its function is as follows. This is one of the proteins that binds to the 5S RNA in the ribosome where it forms part of the central protuberance. The sequence is that of Large ribosomal subunit protein bL25 from Yersinia pestis bv. Antiqua (strain Antiqua).